A 487-amino-acid polypeptide reads, in one-letter code: MNEILKKPYVELKDSLNSGKISSTELVSACINRIREVDGAVKAFLYLDEKKVLNSAEESDKRRKEGKPLSEFDGMPVAIKDNICIRDTITSCSSKILENYKSPFHATVVEKLLEKGFILFPRTNMDEFAMGSSTENSAFQTTRNPFDLERIPGGSSGGSAAAVAASMVPLALGSDTGGSVRQPASLCGLYGLKPTYGTVSRYGLVAYASSLDQIGPFSRELQGCIDLYSVISGKDVRDSTSIHRPKFSASDVQPQDFKGLKVGVIKMTPEIQSEVVKSYDKVLNQLKEKGATLVDIDFSKFGFAIPIYYIIATAECSSNLSRFDGIRFGSRKDKTGKLEDLFVDSRTEGFGPEVKRRILLGTFSLSAGYYDAYYGTAQKARALIRKEYESFFSKVDCILQPTSPTTAFKIGEKTKDPIQMYKADIWTTSVNLAGLPAMSVPMGADQKGLPIGLQITTPHFQEGKLFGIALALSTLEGMNIQFPESIK.

Residues Lys80 and Ser155 each act as charge relay system in the active site. Ser179 (acyl-ester intermediate) is an active-site residue.

It belongs to the amidase family. GatA subfamily. In terms of assembly, heterotrimer of A, B and C subunits.

The catalysed reaction is L-glutamyl-tRNA(Gln) + L-glutamine + ATP + H2O = L-glutaminyl-tRNA(Gln) + L-glutamate + ADP + phosphate + H(+). Functionally, allows the formation of correctly charged Gln-tRNA(Gln) through the transamidation of misacylated Glu-tRNA(Gln) in organisms which lack glutaminyl-tRNA synthetase. The reaction takes place in the presence of glutamine and ATP through an activated gamma-phospho-Glu-tRNA(Gln). The polypeptide is Glutamyl-tRNA(Gln) amidotransferase subunit A (Leptospira interrogans serogroup Icterohaemorrhagiae serovar copenhageni (strain Fiocruz L1-130)).